Reading from the N-terminus, the 343-residue chain is Heat-inducible transcription repressor HrcA (343 aa).

Belongs to the HrcA family.

Its function is as follows. Negative regulator of class I heat shock genes (grpE-dnaK-dnaJ and groELS operons). Prevents heat-shock induction of these operons. The protein is Heat-inducible transcription repressor HrcA of Mycobacterium leprae (strain Br4923).